The sequence spans 108 residues: UPF0102 protein Sfri_0388 (108 aa).

The protein belongs to the UPF0102 family.

This chain is UPF0102 protein Sfri_0388, found in Shewanella frigidimarina (strain NCIMB 400).